A 217-amino-acid chain; its full sequence is Large ribosomal subunit protein uL3 (217 aa).

A disordered region spans residues 137-160; it reads VSASHGSHRNHRKPGSIGASSTPS.

The protein belongs to the universal ribosomal protein uL3 family. In terms of assembly, part of the 50S ribosomal subunit. Forms a cluster with proteins L14 and L19.

Its function is as follows. One of the primary rRNA binding proteins, it binds directly near the 3'-end of the 23S rRNA, where it nucleates assembly of the 50S subunit. The sequence is that of Large ribosomal subunit protein uL3 from Clavibacter sepedonicus (Clavibacter michiganensis subsp. sepedonicus).